Reading from the N-terminus, the 479-residue chain is Cell division protein FtsA (479 aa).

A disordered region spans residues 417–458 (QGRQTERKENEQRDNTDRQREDTPKQTVKKKEKTGPSFGDKL). The segment covering 420–440 (QTERKENEQRDNTDRQREDTP) has biased composition (basic and acidic residues).

Belongs to the FtsA/MreB family. As to quaternary structure, self-interacts. Interacts with FtsZ.

It is found in the cell inner membrane. Its function is as follows. Cell division protein that is involved in the assembly of the Z ring. May serve as a membrane anchor for the Z ring. The sequence is that of Cell division protein FtsA from Porphyromonas gingivalis (strain ATCC BAA-308 / W83).